We begin with the raw amino-acid sequence, 463 residues long: Glycine--tRNA ligase (463 aa).

Positions 102 and 165 each coordinate substrate. ATP-binding positions include 197–199 (RNE), 207–212 (FRTREF), 284–285 (EL), and 328–331 (GLTR). 212–216 (FEQME) is a binding site for substrate. 324–328 (EPAAG) serves as a coordination point for substrate.

It belongs to the class-II aminoacyl-tRNA synthetase family. Homodimer.

It is found in the cytoplasm. The catalysed reaction is tRNA(Gly) + glycine + ATP = glycyl-tRNA(Gly) + AMP + diphosphate. Catalyzes the attachment of glycine to tRNA(Gly). The polypeptide is Glycine--tRNA ligase (Mycobacterium bovis (strain ATCC BAA-935 / AF2122/97)).